The following is an 857-amino-acid chain: MTNEQLQRKHQSLATLITRIIFLVLGLITIGIFIQSYYFSNKIIKQEVMLTKQQTSALVKSLFNNHLSILQIHHDSNSKNEAIRRFFLDGDDEKLEYYFLSMDQADPTHTPEFRFLTTGEGLLWDDGNAHFYGVNEVLLEKISQSVLFGNNWHFMSLHTLMGLRNMLVRRSPVIDTTTGEVLGQYYISVVLDNNFPLVEMLESGSNSDNIVMLVGDKVISHSLSGNEPYDLDSLLAMRDEPSAFDDCLISQTPIEINSTDTLVSILAIQENSHVASLQRQHYLGLATSVVLMLMLSLAIRSWIQNRVANALESLMAYSRFAGTGEKYERFNGSDILEFAHIGHTLENTFEQLESQRRSFQDLFNFALSPMMVWSESGLLIQMNPAAMKELGIEHASPQDFSNPLFQLFKLKLSPHLKMAAQGATLTGINVPIGEKIFRWNLSPIVVENGISGIIVQGQDITTLIDAEKQSNLARREAEQSAKTRADFLAKMSHEIRTPLNGILGIAQLLKRSVNDAENLKQVDVLCNSGEHLLAVLNDILDFSKIEQGKFNIKKRDFNFYDTLNTLENIYRPICREKGVSFEIHNQIPLDCQLHTDQVRLNQIMFNLISNAVKFTPAGRIEVSFKLEKFARSEHSILSIQVSDTGIGIDESKLESIFEPFVQADSLSTREYGGSGLGLTIVKNLVEMLEGEISVQSELCKGSTFYLSIPVEKGECEEQKTPTNPKPEQLFGQGLKVLLVEDNHTNAFILKAFCQKYQMSVEWVQDGTQALEKLKEHAFDLILMDNQLPKMGGIEATREIRETLKLGTPIYACTADAQESTKQEFLSAGANRVIVKPIKEQELHDELLHFKAHYWVEH.

Helical transmembrane passes span 20 to 40 (IIFLVLGLITIGIFIQSYYFS) and 283 to 303 (LGLATSVVLMLMLSLAIRSWI). A Histidine kinase domain is found at 490 to 712 (KMSHEIRTPL…TFYLSIPVEK (223 aa)). At His493 the chain carries Phosphohistidine; by autocatalysis. In terms of domain architecture, Response regulatory spans 735–850 (KVLLVEDNHT…ELHDELLHFK (116 aa)). Asp784 bears the 4-aspartylphosphate mark.

As to quaternary structure, binds the complex formed by the autoinducer and LuxP.

The protein localises to the cell inner membrane. The catalysed reaction is ATP + protein L-histidine = ADP + protein N-phospho-L-histidine.. Functionally, at low cell density, in absence of autoinducer has a kinase activity, and autophosphorylates on a histidine residue. The phosphoryl group is then transferred to an aspartate residue in the response regulator domain. The phosphoryl group is transferred to LuxU, and ultimately to LuxO. At high cell density, in the presence of autoinducer, the kinase activity is inactivated, and the response regulator domain has a phosphatase activity. This Vibrio vulnificus (strain CMCP6) protein is Autoinducer 2 sensor kinase/phosphatase LuxQ (luxQ).